A 22-amino-acid chain; its full sequence is Protein YncP (22 aa).

In Escherichia coli (strain K12), this protein is Protein YncP.